The following is a 215-amino-acid chain: Glycerol-3-phosphate acyltransferase (215 aa).

5 helical membrane-spanning segments follow: residues 1 to 21 (MAFL…SIPT), 57 to 77 (IFVL…VKLW), 85 to 105 (MIPL…AVLG), 126 to 146 (VLLV…LAML), and 165 to 185 (VLMF…IVGL).

Belongs to the PlsY family. In terms of assembly, probably interacts with PlsX.

It localises to the cell inner membrane. The catalysed reaction is an acyl phosphate + sn-glycerol 3-phosphate = a 1-acyl-sn-glycero-3-phosphate + phosphate. Its pathway is lipid metabolism; phospholipid metabolism. In terms of biological role, catalyzes the transfer of an acyl group from acyl-phosphate (acyl-PO(4)) to glycerol-3-phosphate (G3P) to form lysophosphatidic acid (LPA). This enzyme utilizes acyl-phosphate as fatty acyl donor, but not acyl-CoA or acyl-ACP. The polypeptide is Glycerol-3-phosphate acyltransferase (Crocosphaera subtropica (strain ATCC 51142 / BH68) (Cyanothece sp. (strain ATCC 51142))).